A 63-amino-acid chain; its full sequence is Cytochrome c oxidase subunit 7C, mitochondrial (63 aa).

Residues 1 to 16 constitute a mitochondrion transit peptide; the sequence is MWGQGVRRFTTSVVRR. The Mitochondrial matrix segment spans residues 17-33; the sequence is SHYEEGPGKNLPFSVEN. N6-acetyllysine; alternate is present on Lys25. At Lys25 the chain carries N6-succinyllysine; alternate. A helical transmembrane segment spans residues 34–60; the sequence is KWRLLAMMTLYLGSGFAAPFFIVRHQL. The Mitochondrial intermembrane portion of the chain corresponds to 61–63; sequence LKK.

Belongs to the cytochrome c oxidase VIIc family. Component of the cytochrome c oxidase (complex IV, CIV), a multisubunit enzyme composed of 14 subunits. The complex is composed of a catalytic core of 3 subunits MT-CO1, MT-CO2 and MT-CO3, encoded in the mitochondrial DNA, and 11 supernumerary subunits COX4I, COX5A, COX5B, COX6A, COX6B, COX6C, COX7A, COX7B, COX7C, COX8 and NDUFA4, which are encoded in the nuclear genome. The complex exists as a monomer or a dimer and forms supercomplexes (SCs) in the inner mitochondrial membrane with NADH-ubiquinone oxidoreductase (complex I, CI) and ubiquinol-cytochrome c oxidoreductase (cytochrome b-c1 complex, complex III, CIII), resulting in different assemblies (supercomplex SCI(1)III(2)IV(1) and megacomplex MCI(2)III(2)IV(2)). Interacts with RAB5IF.

It localises to the mitochondrion inner membrane. It functions in the pathway energy metabolism; oxidative phosphorylation. In terms of biological role, component of the cytochrome c oxidase, the last enzyme in the mitochondrial electron transport chain which drives oxidative phosphorylation. The respiratory chain contains 3 multisubunit complexes succinate dehydrogenase (complex II, CII), ubiquinol-cytochrome c oxidoreductase (cytochrome b-c1 complex, complex III, CIII) and cytochrome c oxidase (complex IV, CIV), that cooperate to transfer electrons derived from NADH and succinate to molecular oxygen, creating an electrochemical gradient over the inner membrane that drives transmembrane transport and the ATP synthase. Cytochrome c oxidase is the component of the respiratory chain that catalyzes the reduction of oxygen to water. Electrons originating from reduced cytochrome c in the intermembrane space (IMS) are transferred via the dinuclear copper A center (CU(A)) of subunit 2 and heme A of subunit 1 to the active site in subunit 1, a binuclear center (BNC) formed by heme A3 and copper B (CU(B)). The BNC reduces molecular oxygen to 2 water molecules using 4 electrons from cytochrome c in the IMS and 4 protons from the mitochondrial matrix. The protein is Cytochrome c oxidase subunit 7C, mitochondrial (COX7C) of Carlito syrichta (Philippine tarsier).